We begin with the raw amino-acid sequence, 750 residues long: GTP pyrophosphokinase rsh (750 aa).

The HD domain occupies Tyr-45–Met-144. The TGS domain occupies Asp-390–Arg-451. The tract at residues Ala-587–Leu-613 is disordered. The 75-residue stretch at Arg-676–Gly-750 folds into the ACT domain.

This sequence belongs to the RelA/SpoT family.

It catalyses the reaction GTP + ATP = guanosine 3'-diphosphate 5'-triphosphate + AMP. In terms of biological role, functions as a (p)ppGpp synthase. In eubacteria ppGpp (guanosine 3'-diphosphate 5'-diphosphate) is a mediator of the stringent response that coordinates a variety of cellular activities in response to changes in nutritional abundance. It is necessary for persistence in mice, essential for intracellular growth of Brucella and required for expression of the type IV secretion system VirB and therefore plays a role in adaptation of Brucella to its intracellular host environment. The sequence is that of GTP pyrophosphokinase rsh (rsh) from Brucella melitensis biotype 1 (strain ATCC 23456 / CCUG 17765 / NCTC 10094 / 16M).